A 230-amino-acid polypeptide reads, in one-letter code: Sugar fermentation stimulation protein homolog (230 aa).

The protein belongs to the SfsA family.

The chain is Sugar fermentation stimulation protein homolog from Clostridium perfringens (strain SM101 / Type A).